A 151-amino-acid polypeptide reads, in one-letter code: MFDVSFTELMVIGVIALVVIGPERLPKVARTIGHLLGRAQRYVNDVKSDIRREIELDELRKFKDEMDETARSMQTSLRETEDTLRDSTQALRAELDDTARDASKAVNGADAPAEPAPAVASDTDTDTDTRSIAPPAAATPADKTPPTGSAT.

The chain crosses the membrane as a helical span at residues 1–21 (MFDVSFTELMVIGVIALVVIG). Positions 66-151 (MDETARSMQT…DKTPPTGSAT (86 aa)) are disordered. Over residues 93–103 (AELDDTARDAS) the composition is skewed to basic and acidic residues. Composition is skewed to low complexity over residues 109–122 (ADAPAEPAPAVASD) and 133–151 (APPAAATPADKTPPTGSAT).

Belongs to the TatB family. The Tat system comprises two distinct complexes: a TatABC complex, containing multiple copies of TatA, TatB and TatC subunits, and a separate TatA complex, containing only TatA subunits. Substrates initially bind to the TatABC complex, which probably triggers association of the separate TatA complex to form the active translocon.

It localises to the cell inner membrane. In terms of biological role, part of the twin-arginine translocation (Tat) system that transports large folded proteins containing a characteristic twin-arginine motif in their signal peptide across membranes. Together with TatC, TatB is part of a receptor directly interacting with Tat signal peptides. TatB may form an oligomeric binding site that transiently accommodates folded Tat precursor proteins before their translocation. The protein is Sec-independent protein translocase protein TatB of Bordetella parapertussis (strain 12822 / ATCC BAA-587 / NCTC 13253).